An 81-amino-acid polypeptide reads, in one-letter code: Acyl carrier protein (81 aa).

The 76-residue stretch at 3–78 (QEIFDKIKNI…EAVNIIAEKT (76 aa)) folds into the Carrier domain. At Ser-38 the chain carries O-(pantetheine 4'-phosphoryl)serine.

It belongs to the acyl carrier protein (ACP) family. Post-translationally, 4'-phosphopantetheine is transferred from CoA to a specific serine of apo-ACP by AcpS. This modification is essential for activity because fatty acids are bound in thioester linkage to the sulfhydryl of the prosthetic group.

It is found in the cytoplasm. Its pathway is lipid metabolism; fatty acid biosynthesis. Functionally, carrier of the growing fatty acid chain in fatty acid biosynthesis. The chain is Acyl carrier protein from Picosynechococcus sp. (strain ATCC 27264 / PCC 7002 / PR-6) (Agmenellum quadruplicatum).